The primary structure comprises 427 residues: Glutamate-1-semialdehyde 2,1-aminomutase (427 aa).

Lys265 carries the N6-(pyridoxal phosphate)lysine modification.

The protein belongs to the class-III pyridoxal-phosphate-dependent aminotransferase family. HemL subfamily. In terms of assembly, homodimer. Requires pyridoxal 5'-phosphate as cofactor.

The protein localises to the cytoplasm. The catalysed reaction is (S)-4-amino-5-oxopentanoate = 5-aminolevulinate. Its pathway is porphyrin-containing compound metabolism; protoporphyrin-IX biosynthesis; 5-aminolevulinate from L-glutamyl-tRNA(Glu): step 2/2. This chain is Glutamate-1-semialdehyde 2,1-aminomutase, found in Colwellia psychrerythraea (strain 34H / ATCC BAA-681) (Vibrio psychroerythus).